Consider the following 104-residue polypeptide: MLETLYQEALKRKKEPKEGSYTSYLYDKGLDKILKKVGEEATEVVIAAKNDDKNEMANETADLLYHMAVALVETGVSLEEVEAVLQARQGKQSRIHDRPEIDQY.

It belongs to the PRA-PH family.

It is found in the cytoplasm. The catalysed reaction is 1-(5-phospho-beta-D-ribosyl)-ATP + H2O = 1-(5-phospho-beta-D-ribosyl)-5'-AMP + diphosphate + H(+). It participates in amino-acid biosynthesis; L-histidine biosynthesis; L-histidine from 5-phospho-alpha-D-ribose 1-diphosphate: step 2/9. This chain is Phosphoribosyl-ATP pyrophosphatase, found in Streptococcus gordonii (strain Challis / ATCC 35105 / BCRC 15272 / CH1 / DL1 / V288).